The primary structure comprises 239 residues: Orotidine 5'-phosphate decarboxylase (239 aa).

Residues Asp-10, Lys-32, 59 to 68, Thr-122, Arg-184, Gln-193, Gly-213, and Arg-214 contribute to the substrate site; that span reads DLKLHDIPNT. Lys-61 serves as the catalytic Proton donor.

This sequence belongs to the OMP decarboxylase family. Type 1 subfamily. Homodimer.

It carries out the reaction orotidine 5'-phosphate + H(+) = UMP + CO2. The protein operates within pyrimidine metabolism; UMP biosynthesis via de novo pathway; UMP from orotate: step 2/2. Functionally, catalyzes the decarboxylation of orotidine 5'-monophosphate (OMP) to uridine 5'-monophosphate (UMP). The sequence is that of Orotidine 5'-phosphate decarboxylase from Geobacillus thermodenitrificans (strain NG80-2).